A 955-amino-acid polypeptide reads, in one-letter code: Glycine dehydrogenase (decarboxylating) (955 aa).

N6-(pyridoxal phosphate)lysine is present on K702.

The protein belongs to the GcvP family. The glycine cleavage system is composed of four proteins: P, T, L and H. Pyridoxal 5'-phosphate is required as a cofactor.

It catalyses the reaction N(6)-[(R)-lipoyl]-L-lysyl-[glycine-cleavage complex H protein] + glycine + H(+) = N(6)-[(R)-S(8)-aminomethyldihydrolipoyl]-L-lysyl-[glycine-cleavage complex H protein] + CO2. Its function is as follows. The glycine cleavage system catalyzes the degradation of glycine. The P protein binds the alpha-amino group of glycine through its pyridoxal phosphate cofactor; CO(2) is released and the remaining methylamine moiety is then transferred to the lipoamide cofactor of the H protein. The chain is Glycine dehydrogenase (decarboxylating) from Bordetella avium (strain 197N).